A 640-amino-acid polypeptide reads, in one-letter code: Threonine--tRNA ligase (640 aa).

The 61-residue stretch at 1–61 (MPIITLPNGD…TEDSTLQIIT (61 aa)) folds into the TGS domain. Positions 242–533 (DHRKIGKALD…LIEHYAGFMP (292 aa)) are catalytic. Residues cysteine 333, histidine 384, and histidine 510 each contribute to the Zn(2+) site.

The protein belongs to the class-II aminoacyl-tRNA synthetase family. As to quaternary structure, homodimer. Zn(2+) serves as cofactor.

It is found in the cytoplasm. It catalyses the reaction tRNA(Thr) + L-threonine + ATP = L-threonyl-tRNA(Thr) + AMP + diphosphate + H(+). Its function is as follows. Catalyzes the attachment of threonine to tRNA(Thr) in a two-step reaction: L-threonine is first activated by ATP to form Thr-AMP and then transferred to the acceptor end of tRNA(Thr). Also edits incorrectly charged L-seryl-tRNA(Thr). The polypeptide is Threonine--tRNA ligase (Acinetobacter baumannii (strain AB307-0294)).